A 705-amino-acid polypeptide reads, in one-letter code: Elongation factor G (705 aa).

One can recognise a tr-type G domain in the interval 8-294; it reads NLYRNFGIMA…AVIDYLPSPL (287 aa). GTP contacts are provided by residues 17–24, 92–96, and 146–149; these read AHIDAGKT, DTPGH, and NKMD.

Belongs to the TRAFAC class translation factor GTPase superfamily. Classic translation factor GTPase family. EF-G/EF-2 subfamily.

It localises to the cytoplasm. Catalyzes the GTP-dependent ribosomal translocation step during translation elongation. During this step, the ribosome changes from the pre-translocational (PRE) to the post-translocational (POST) state as the newly formed A-site-bound peptidyl-tRNA and P-site-bound deacylated tRNA move to the P and E sites, respectively. Catalyzes the coordinated movement of the two tRNA molecules, the mRNA and conformational changes in the ribosome. This chain is Elongation factor G, found in Ruegeria pomeroyi (strain ATCC 700808 / DSM 15171 / DSS-3) (Silicibacter pomeroyi).